We begin with the raw amino-acid sequence, 352 residues long: Ly6/PLAUR domain-containing protein 3 (352 aa).

The N-terminal stretch at Met1–Ala32 is a signal peptide. A UPAR/Ly6 1 domain is found at Cys35–Pro128. N-linked (GlcNAc...) asparagine glycans are attached at residues Asn120, Asn131, Asn178, and Asn185. Residues Cys142–Asn224 form the UPAR/Ly6 2 domain. Pro residues predominate over residues Arg236–Pro249. Residues Arg236–Gly330 form a disordered region. Over residues Ala250–Ser285 the composition is skewed to low complexity. Composition is skewed to basic and acidic residues over residues Ser286–Ser300 and His309–Glu320. A lipid anchor (GPI-anchor amidated glycine) is attached at Gly330. The propeptide at Gly331–Leu352 is removed in mature form.

In terms of assembly, interacts with AGR2 and AGR3. Binds laminin-1 and laminin-5. Interacts with LGALS3. As to expression, found predominantly on the basal layers of squamous epithelium. Expressed in the gravid uterus and on epithelial of the upper gastrointestinal tract. It has been found in tumor lines which metastasize via the lymphatic system.

Its subcellular location is the cell membrane. Supports cell migration. May be involved in tumor progression. This chain is Ly6/PLAUR domain-containing protein 3 (Lypd3), found in Rattus norvegicus (Rat).